We begin with the raw amino-acid sequence, 369 residues long: Biglycan (369 aa).

Residues 1–16 form the signal peptide; it reads MRPLWLLTLLLALSQA. Residues 17–37 constitute a propeptide that is removed on maturation; sequence LPFEQKGFWDFTLDDGLLMMN. Residues serine 42 and serine 48 are each glycosylated (O-linked (Xyl...) (glycosaminoglycan) serine). 2 disulfide bridges follow: cysteine 64–cysteine 70 and cysteine 68–cysteine 77. 12 LRR repeats span residues 83–103, 104–127, 128–151, 152–172, 173–196, 197–221, 222–242, 243–266, 267–290, 291–313, 314–343, and 344–369; these read KTVP…NNDI, SELR…NNKI, SKIH…KNHL, VEIP…DNRI, RKVP…GNPL, ENSG…EAKL, TGIP…HNKI, QAIE…HNQI, RMIE…NNKL, SRVP…SNNI, TKVG…NNPV, and PYWE…NYKK. N-linked (GlcNAc...) asparagine glycosylation is found at asparagine 271 and asparagine 312. Residues cysteine 322 and cysteine 355 are joined by a disulfide bond.

The protein belongs to the small leucine-rich proteoglycan (SLRP) family. SLRP class I subfamily. In terms of assembly, homodimer. Forms a ternary complex with MFAP2 and ELN. Post-translationally, the two attached glycosaminoglycan chains can be either chondroitin sulfate or dermatan sulfate. As to expression, found in several connective tissues, especially in articular cartilages.

The protein resides in the secreted. It localises to the extracellular space. It is found in the extracellular matrix. In terms of biological role, may be involved in collagen fiber assembly. In Rattus norvegicus (Rat), this protein is Biglycan (Bgn).